The sequence spans 365 residues: Probable secreted beta-glucosidase UTH1 (365 aa).

Residues 1–17 (MKLSALLALSASTAVLA) form the signal peptide.

Belongs to the SUN family.

It is found in the mitochondrion outer membrane. The protein resides in the secreted. It localises to the cell wall. Its function is as follows. Involved in aging, oxidative stress response, and in the regulation of mitochondrial biogenesis. Inactivation of UTH1 increases life span, leads to higher resistance to heat stress and against hydrogen peroxide, and increases sensitivity to the superoxide radical-generating drug paraquat and to copper. Also required for the selective autophagic degradation of mitochondria (mitophagy) in response to nitrogen starvation. Involved in the remodeling of the cell wall during the various phases of yeast culture development and under various environmental conditions and plays a role in septation. Involved in cell sensitivity to boric acid. This is Probable secreted beta-glucosidase UTH1 (UTH1) from Saccharomyces cerevisiae (strain ATCC 204508 / S288c) (Baker's yeast).